The primary structure comprises 572 residues: Probable serine/threonine-protein kinase At1g54610 (572 aa).

The segment at 1–89 (MGCVFGREAA…SNPSKHWRGE (89 aa)) is disordered. Positions 9–40 (AATTTTAEAKQAKSSKASSGVVVVGESSVTKS) are enriched in low complexity. The span at 47-67 (DVEKKKNEEANGDKERKSSKG) shows a compositional bias: basic and acidic residues. Positions 74 to 83 (KPNPRLSNPS) are enriched in polar residues. One can recognise a Protein kinase domain in the interval 118-402 (FEKIDKIGQG…ASAALKSEFF (285 aa)). ATP is bound by residues 124-132 (IGQGTYSNV) and K147. D242 (proton acceptor) is an active-site residue. Disordered regions lie at residues 409-474 (CEPA…NVDR) and 526-572 (SSFN…AVVA). Over residues 419 to 434 (PSKEIDAKRRDEETRR) the composition is skewed to basic and acidic residues. Basic residues predominate over residues 554–572 (SRKKKDNTKSSKGKRAVVA).

Belongs to the protein kinase superfamily. Ser/Thr protein kinase family.

The enzyme catalyses L-seryl-[protein] + ATP = O-phospho-L-seryl-[protein] + ADP + H(+). The catalysed reaction is L-threonyl-[protein] + ATP = O-phospho-L-threonyl-[protein] + ADP + H(+). This is Probable serine/threonine-protein kinase At1g54610 from Arabidopsis thaliana (Mouse-ear cress).